The primary structure comprises 251 residues: Prolactin-7B1 (251 aa).

The signal sequence occupies residues 1-29 (MNTSLTQLCFWALQILLMSNLLLWEDVVS). 2 N-linked (GlcNAc...) asparagine glycosylation sites follow: N2 and N73. Disulfide bonds link C100–C216 and C233–C241.

It belongs to the somatotropin/prolactin family. Expression restricted to placenta. Abundantly expressed in trophoblast cells of the junctional zone and trophoblasts migrating into the mesometrial decidua.

The protein resides in the secreted. The polypeptide is Prolactin-7B1 (Prl7b1) (Mus musculus (Mouse)).